Consider the following 545-residue polypeptide: Chaperonin GroEL (545 aa).

ATP-binding positions include 30–33, Lys-51, 87–91, Gly-415, and Asp-495; these read TLGP and DGTTT.

The protein belongs to the chaperonin (HSP60) family. Forms a cylinder of 14 subunits composed of two heptameric rings stacked back-to-back. Interacts with the co-chaperonin GroES.

The protein resides in the cytoplasm. It carries out the reaction ATP + H2O + a folded polypeptide = ADP + phosphate + an unfolded polypeptide.. Together with its co-chaperonin GroES, plays an essential role in assisting protein folding. The GroEL-GroES system forms a nano-cage that allows encapsulation of the non-native substrate proteins and provides a physical environment optimized to promote and accelerate protein folding. This is Chaperonin GroEL from Shewanella sp. (strain W3-18-1).